The sequence spans 811 residues: Probable inorganic carbon transporter subunit DabA (811 aa).

Zn(2+) contacts are provided by Cys-336, Asp-338, His-498, and Cys-513.

It belongs to the inorganic carbon transporter (TC 9.A.2) DabA family. As to quaternary structure, forms a complex with DabB. It depends on Zn(2+) as a cofactor.

It is found in the cell inner membrane. Functionally, part of an energy-coupled inorganic carbon pump. The chain is Probable inorganic carbon transporter subunit DabA from Azorhizobium caulinodans (strain ATCC 43989 / DSM 5975 / JCM 20966 / LMG 6465 / NBRC 14845 / NCIMB 13405 / ORS 571).